The primary structure comprises 123 residues: Late histone H2B.L3 (123 aa).

The span at 1-10 (MPAKAQAAGK) shows a compositional bias: low complexity. Residues 1 to 32 (MPAKAQAAGKKGSKKAKAPKPSGDKKRRRKRK) are disordered. Ser110 carries an O-linked (GlcNAc) serine glycan. Residue Lys118 forms a Glycyl lysine isopeptide (Lys-Gly) (interchain with G-Cter in ubiquitin) linkage.

Belongs to the histone H2B family. The nucleosome is a histone octamer containing two molecules each of H2A, H2B, H3 and H4 assembled in one H3-H4 heterotetramer and two H2A-H2B heterodimers. The octamer wraps approximately 147 bp of DNA. Monoubiquitination of Lys-118 gives a specific tag for epigenetic transcriptional activation and is also prerequisite for histone H3 'Lys-4' and 'Lys-79' methylation. Post-translationally, glcNAcylation at Ser-110 promotes monoubiquitination of Lys-118. It fluctuates in response to extracellular glucose, and associates with transcribed genes.

The protein resides in the nucleus. It localises to the chromosome. Its function is as follows. Core component of nucleosome. Nucleosomes wrap and compact DNA into chromatin, limiting DNA accessibility to the cellular machineries which require DNA as a template. Histones thereby play a central role in transcription regulation, DNA repair, DNA replication and chromosomal stability. DNA accessibility is regulated via a complex set of post-translational modifications of histones, also called histone code, and nucleosome remodeling. The polypeptide is Late histone H2B.L3 (Strongylocentrotus purpuratus (Purple sea urchin)).